Consider the following 1252-residue polypeptide: LRR receptor-like serine/threonine-protein kinase GSO2 (1252 aa).

The N-terminal stretch at M1–G22 is a signal peptide. At Q23–V876 the chain is on the extracellular side. N62, N77, and N117 each carry an N-linked (GlcNAc...) asparagine glycan. 10 LRR repeats span residues F94 to L118, S120 to L143, V144 to N166, V168 to R190, L191 to C215, S217 to L239, K240 to L263, S265 to E286, L287 to R310, and N312 to N335. N157 is a glycosylation site (N-linked (GlcNAc...) asparagine). N-linked (GlcNAc...) asparagine glycans are attached at residues N214 and N229. N-linked (GlcNAc...) asparagine glycosylation occurs at N299. N-linked (GlcNAc...) asparagine glycosylation occurs at N336. LRR repeat units follow at residues T337–C360, Q361–L384, E386–L408, T409–G433, L435–C456, T457–L480, K481–C504, Q506–L528, T529–L552, N554–S575, S577–S599, T600–K622, I623–K648, L650–K670, L671–L695, N697–L719, Q720–L743, K745–L767, Q768–L792, P793–M816, and S818–R839. N-linked (GlcNAc...) asparagine glycosylation is found at N370, N394, and N407. N-linked (GlcNAc...) asparagine glycosylation is present at N455. Residues N538, N554, N559, and N566 are each glycosylated (N-linked (GlcNAc...) asparagine). N-linked (GlcNAc...) asparagine glycosylation is present at N709. N-linked (GlcNAc...) asparagine glycosylation occurs at N780. An N-linked (GlcNAc...) asparagine glycan is attached at N823. Residues I877–F897 form a helical membrane-spanning segment. At F898–K1252 the chain is on the cytoplasmic side. T945 carries the post-translational modification Phosphothreonine. Residues L948–L1232 enclose the Protein kinase domain. Residues I954–V962 and K976 contribute to the ATP site. 2 positions are modified to phosphotyrosine: Y1024 and Y1066. D1079 functions as the Proton acceptor in the catalytic mechanism. S1114 bears the Phosphoserine mark. 2 positions are modified to phosphotyrosine: Y1124 and Y1131.

Belongs to the protein kinase superfamily. Ser/Thr protein kinase family. As to quaternary structure, interacts with CIF1 and CIF2. In terms of tissue distribution, mostly expressed in siliques, seeds, developing embryos and seedlings, detected in flower buds, but not in roots, leaves or stems.

The protein resides in the cell membrane. It carries out the reaction L-seryl-[protein] + ATP = O-phospho-L-seryl-[protein] + ADP + H(+). The enzyme catalyses L-threonyl-[protein] + ATP = O-phospho-L-threonyl-[protein] + ADP + H(+). Functionally, together with GSO1, receptor-like serine/threonine-kinase required during the development of the epidermal surface in embryos and cotyledons. Involved in the nuclear division phase of megagametogenesis. In coordination with GSO2, regulates root growth through control of cell division and cell fate specification. Controls seedling root growth by modulating sucrose response after germination. Receptor of the peptide hormones CIF1 and CIF2 required for contiguous Casparian strip diffusion barrier formation in roots. The polypeptide is LRR receptor-like serine/threonine-protein kinase GSO2 (Arabidopsis thaliana (Mouse-ear cress)).